Here is a 94-residue protein sequence, read N- to C-terminus: UPF0235 protein TON_0641 (94 aa).

Belongs to the UPF0235 family.

This is UPF0235 protein TON_0641 from Thermococcus onnurineus (strain NA1).